The following is a 199-amino-acid chain: Nucleoside triphosphate pyrophosphatase (199 aa).

Asp-76 (proton acceptor) is an active-site residue.

The protein belongs to the Maf family. Requires a divalent metal cation as cofactor.

It is found in the cytoplasm. The catalysed reaction is a ribonucleoside 5'-triphosphate + H2O = a ribonucleoside 5'-phosphate + diphosphate + H(+). It carries out the reaction a 2'-deoxyribonucleoside 5'-triphosphate + H2O = a 2'-deoxyribonucleoside 5'-phosphate + diphosphate + H(+). Nucleoside triphosphate pyrophosphatase. May have a dual role in cell division arrest and in preventing the incorporation of modified nucleotides into cellular nucleic acids. This chain is Nucleoside triphosphate pyrophosphatase, found in Roseobacter denitrificans (strain ATCC 33942 / OCh 114) (Erythrobacter sp. (strain OCh 114)).